Here is a 206-residue protein sequence, read N- to C-terminus: Crossover junction endodeoxyribonuclease RuvC (206 aa).

Catalysis depends on residues aspartate 7, glutamate 67, and aspartate 138. Residues aspartate 7, glutamate 67, and aspartate 138 each coordinate Mg(2+).

The protein belongs to the RuvC family. In terms of assembly, homodimer which binds Holliday junction (HJ) DNA. The HJ becomes 2-fold symmetrical on binding to RuvC with unstacked arms; it has a different conformation from HJ DNA in complex with RuvA. In the full resolvosome a probable DNA-RuvA(4)-RuvB(12)-RuvC(2) complex forms which resolves the HJ. Mg(2+) serves as cofactor.

It is found in the cytoplasm. The enzyme catalyses Endonucleolytic cleavage at a junction such as a reciprocal single-stranded crossover between two homologous DNA duplexes (Holliday junction).. Functionally, the RuvA-RuvB-RuvC complex processes Holliday junction (HJ) DNA during genetic recombination and DNA repair. Endonuclease that resolves HJ intermediates. Cleaves cruciform DNA by making single-stranded nicks across the HJ at symmetrical positions within the homologous arms, yielding a 5'-phosphate and a 3'-hydroxyl group; requires a central core of homology in the junction. The consensus cleavage sequence is 5'-(A/T)TT(C/G)-3'. Cleavage occurs on the 3'-side of the TT dinucleotide at the point of strand exchange. HJ branch migration catalyzed by RuvA-RuvB allows RuvC to scan DNA until it finds its consensus sequence, where it cleaves and resolves the cruciform DNA. This is Crossover junction endodeoxyribonuclease RuvC from Anaeromyxobacter sp. (strain Fw109-5).